Reading from the N-terminus, the 398-residue chain is Glycosyltransferase GlyF (398 aa).

Residues 1-259 (MRKSIVLAAD…SEIAFQRSDL (259 aa)) form a GT8 domain region. UDP contacts are provided by residues 8-13 (AADNAY) and 101-102 (DS). Aspartate 101, aspartate 103, and histidine 221 together coordinate Mn(2+). 221-227 (HYASHDK) serves as a coordination point for UDP.

It in the N-terminal section; belongs to the glycosyltransferase 8 family.

Its function is as follows. May be involved in the polymorphic O-glycosylation of the serine-rich repeat protein PsrP. Has hydrolytic activity against UDP-galactose and to a lesser extent against UDP-glucose; no glycosyltransferase activity has been seen with tested substrates. This Streptococcus pneumoniae serotype 4 (strain ATCC BAA-334 / TIGR4) protein is Glycosyltransferase GlyF.